Consider the following 460-residue polypeptide: MRQEKDSLGIVEVPEDKLYGAQTMRSRNFFSWGPELMPYEVIRALVWIKKCAAQANQDLGFLDSKHCDMIVAAADEILEGGFEEHFPLKVWQTGSGTQSNMNVNEVIANLAIRHHGGVLGSKDPIHPNDHVNKSQSSNDVFPTAMHIAAVISLKNKLIPALDHMIRVLDAKVEEFRHDVKIGRTHLMDAVPMTLGQEFSGYSSQLRHCLESIAFSLAHLYELAIGATAVGTGLNVPEGFVEKIIHYLRKETDEPFIPASNYFSALSCHDALVDAHGSLATLACALTKIATDLSFLGSGPRCGLGELFFPENEPGSSIMPGKVNPTQCEALQMVCAQVLGNNQTVIIGGSRGNFELNVMKPVIIYNFLQSVDLLSEGMRAFSEFFVKGLKVNKARLQDNINNSLMLVTALAPVLGYDKCSKAALKAFHESISLKEACLALGYLSEKEFDRLVVPENMVGNH.

Substrate-binding positions include 95–97 (SGT), 126–129 (HPND), 136–138 (SSN), and Thr-184. His-185 serves as the catalytic Proton donor/acceptor. The active site involves Ser-315. Residues Ser-316 and 321-323 (KVN) each bind substrate.

The protein belongs to the class-II fumarase/aspartase family. Fumarase subfamily. As to quaternary structure, homotetramer.

It is found in the cytoplasm. It catalyses the reaction (S)-malate = fumarate + H2O. Its pathway is carbohydrate metabolism; tricarboxylic acid cycle; (S)-malate from fumarate: step 1/1. In terms of biological role, involved in the TCA cycle. Catalyzes the stereospecific interconversion of fumarate to L-malate. The protein is Fumarate hydratase class II of Chlamydia pneumoniae (Chlamydophila pneumoniae).